Here is a 264-residue protein sequence, read N- to C-terminus: 5'-nucleotidase SurE (264 aa).

Aspartate 12, aspartate 13, serine 43, and asparagine 98 together coordinate a divalent metal cation.

Belongs to the SurE nucleotidase family. A divalent metal cation serves as cofactor.

It localises to the cytoplasm. It catalyses the reaction a ribonucleoside 5'-phosphate + H2O = a ribonucleoside + phosphate. Its function is as follows. Nucleotidase that shows phosphatase activity on nucleoside 5'-monophosphates. The chain is 5'-nucleotidase SurE from Sulfurovum sp. (strain NBC37-1).